We begin with the raw amino-acid sequence, 219 residues long: Probable lipoprotein YiaD (219 aa).

The signal sequence occupies residues 1-20 (MKKRVYLIAAVVSGALAVSG). Cys21 is lipidated: N-palmitoyl cysteine. Cys21 is lipidated: S-diacylglycerol cysteine. Transmembrane regions (helical) follow at residues 37–55 (IGAGLGSLVGAGIGALSSS) and 62–84 (GALIGAAAGAALGGGVGYYMDVQ). The OmpA-like domain occupies 103–219 (GDNIILNMPN…RRVEITLSPL (117 aa)).

Its subcellular location is the cell inner membrane. The protein localises to the cell outer membrane. In terms of biological role, suppresses temperature-sensitive mutations in BamB when overexpressed. The protein is Probable lipoprotein YiaD (yiaD) of Escherichia coli (strain K12).